The sequence spans 112 residues: Large ribosomal subunit protein eL30 (112 aa).

It belongs to the eukaryotic ribosomal protein eL30 family.

In Euphorbia esula (Leafy spurge), this protein is Large ribosomal subunit protein eL30 (RPL30).